Reading from the N-terminus, the 240-residue chain is Methylthioribulose-1-phosphate dehydratase (240 aa).

Cysteine 100 is a binding site for substrate. The Zn(2+) site is built by histidine 117 and histidine 119. Glutamate 146 functions as the Proton donor/acceptor in the catalytic mechanism. A Zn(2+)-binding site is contributed by histidine 202.

The protein belongs to the aldolase class II family. MtnB subfamily. Zn(2+) is required as a cofactor.

It localises to the cytoplasm. The catalysed reaction is 5-(methylsulfanyl)-D-ribulose 1-phosphate = 5-methylsulfanyl-2,3-dioxopentyl phosphate + H2O. It participates in amino-acid biosynthesis; L-methionine biosynthesis via salvage pathway; L-methionine from S-methyl-5-thio-alpha-D-ribose 1-phosphate: step 2/6. Its function is as follows. Catalyzes the dehydration of methylthioribulose-1-phosphate (MTRu-1-P) into 2,3-diketo-5-methylthiopentyl-1-phosphate (DK-MTP-1-P). The sequence is that of Methylthioribulose-1-phosphate dehydratase from Emericella nidulans (strain FGSC A4 / ATCC 38163 / CBS 112.46 / NRRL 194 / M139) (Aspergillus nidulans).